Consider the following 382-residue polypeptide: D-galactonate dehydratase (382 aa).

Asp183 contacts Mg(2+). The active-site Proton donor is His185. 2 residues coordinate Mg(2+): Glu209 and Glu235. His285 serves as the catalytic Proton acceptor.

This sequence belongs to the mandelate racemase/muconate lactonizing enzyme family. GalD subfamily. Mg(2+) serves as cofactor.

The catalysed reaction is D-galactonate = 2-dehydro-3-deoxy-D-galactonate + H2O. Its pathway is carbohydrate acid metabolism; D-galactonate degradation; D-glyceraldehyde 3-phosphate and pyruvate from D-galactonate: step 1/3. In terms of biological role, catalyzes the dehydration of D-galactonate to 2-keto-3-deoxy-D-galactonate. The protein is D-galactonate dehydratase of Xanthomonas campestris pv. campestris (strain 8004).